The primary structure comprises 552 residues: Non-structural protein NS1 (552 aa).

It belongs to the orbivirus non-structural protein NS1 family.

The polypeptide is Non-structural protein NS1 (Segment-5) (Epizootic hemorrhagic disease virus 2 (strain Alberta) (EHDV-2)).